A 322-amino-acid chain; its full sequence is Cytochrome c biogenesis protein CcsA (322 aa).

The next 8 membrane-spanning stretches (helical) occupy residues 17 to 37, 44 to 64, 71 to 91, 98 to 118, 143 to 163, 225 to 245, 258 to 273, and 286 to 306; these read VVSI…IVGL, GMIA…IYLG, LYES…VPYF, LSAL…SGLL, MVLG…LLVI, VISL…VWAN, ETWA…IYLH, and AIVA…VNLL.

The protein belongs to the CcmF/CycK/Ccl1/NrfE/CcsA family. May interact with Ccs1.

The protein localises to the plastid. It is found in the chloroplast thylakoid membrane. Required during biogenesis of c-type cytochromes (cytochrome c6 and cytochrome f) at the step of heme attachment. This is Cytochrome c biogenesis protein CcsA from Vitis vinifera (Grape).